The primary structure comprises 312 residues: Olfactory receptor 6C70 (312 aa).

Over 1 to 22 (MKNHTRQIEFILLGLTDNSQLQ) the chain is Extracellular. N-linked (GlcNAc...) asparagine glycosylation occurs at N3. A helical membrane pass occupies residues 23–43 (IVIFLFLLLNCVLSMIGNFTI). Residues 44 to 63 (IALILLDSQLKTPMYFFLRN) are Cytoplasmic-facing. The chain crosses the membrane as a helical span at residues 64-84 (FSFLEISFTTACIPRFLITIV). Residues 85–95 (TREKTISCNGC) lie on the Extracellular side of the membrane. Cysteines 95 and 177 form a disulfide. The helical transmembrane segment at 96-116 (ISQLFFYIFLGVTEFFLLAAL) threads the bilayer. Over 117-141 (SYDRYVAICKPLRYMSIMSNKVCYQ) the chain is Cytoplasmic. A helical transmembrane segment spans residues 142-162 (LVFSSWVTGFLIIFTPLILGL). Over 163–194 (NLDFCASNIIDHFICDISLILQLSCSDTHLLE) the chain is Extracellular. Residues 195-215 (LIAFLLAVMTLIVTLFLVILS) traverse the membrane as a helical segment. At 216–237 (YSYIIKTILKFPSAQQKKKAFS) the chain is on the cytoplasmic side. Residues 238 to 258 (TCSSHMIVVSITYGSCMFIYI) traverse the membrane as a helical segment. Residues 259-272 (KPSANERVALSKGV) are Extracellular-facing. The helical transmembrane segment at 273-290 (TVLNTSVAPLLNPFIYTL) threads the bilayer. At 291-312 (RNQQVKQAFKAVFRKIFSASDK) the chain is on the cytoplasmic side.

Belongs to the G-protein coupled receptor 1 family.

The protein localises to the cell membrane. In terms of biological role, odorant receptor. The polypeptide is Olfactory receptor 6C70 (OR6C70) (Homo sapiens (Human)).